The following is a 397-amino-acid chain: Enoyl-[acyl-carrier-protein] reductase [NADH] (397 aa).

Residues 48–53 (GASTGY), 74–75 (FE), 111–112 (DA), and 139–140 (VA) each bind NAD(+). Tyr225 is a binding site for substrate. Catalysis depends on Tyr235, which acts as the Proton donor. Residues Lys244 and 273–275 (VVT) contribute to the NAD(+) site.

It belongs to the TER reductase family. In terms of assembly, monomer.

It carries out the reaction a 2,3-saturated acyl-[ACP] + NAD(+) = a (2E)-enoyl-[ACP] + NADH + H(+). The protein operates within lipid metabolism; fatty acid biosynthesis. In terms of biological role, involved in the final reduction of the elongation cycle of fatty acid synthesis (FAS II). Catalyzes the reduction of a carbon-carbon double bond in an enoyl moiety that is covalently linked to an acyl carrier protein (ACP). The sequence is that of Enoyl-[acyl-carrier-protein] reductase [NADH] from Burkholderia pseudomallei (strain K96243).